The primary structure comprises 42 residues: Proline-rich antimicrobial peptide 2 (42 aa).

As to expression, hemolymph.

The protein resides in the secreted. Its function is as follows. Antimicrobial protein. Has antibacterial activity against the Gram-positive bacterium M.luteus (MIC=8.6 uM). Lacks antibacterial activity against the Gram-positive bacteria B.circulans, L.monocytogenes, S.aureus, and S.lutea, and the Gram-negative bacteria E.coli D31, E.coli ATCC 25922, and S.typhimurium. Lacks antifungal activity against S.cerevisiae, P.pastoris, Z.marxianus, C.albicans, C.fructus, C.wickerhamii, A.niger, F.oxysporum, and T.harizianum. In Galleria mellonella (Greater wax moth), this protein is Proline-rich antimicrobial peptide 2.